Here is a 406-residue protein sequence, read N- to C-terminus: Prisilkin-39 (406 aa).

An N-terminal signal peptide occupies residues 1–19; the sequence is MKGFLTLLLVCAILSTGYC. Transmembrane regions (helical) follow at residues 26-48 and 58-80; these read ALTGLVAGATIGALASGGLGAGA and VGVGAVGIPVAVGGGIPYGYGGY. Residues 78-197 form a 10 X 12 AA tandem repeat of G-G-Y-[SG]-G-Y-[GS]-Y-G-Y-P-[AT] region; it reads GGYSGYGYGY…YSGYSYGYPT (120 aa).

Expression is confined to the prism and organic layers of the shell with no expression detected in the nacreous shell layer. Also expressed in the mantle edge, extrapallial fluid, hemolymph and, to a lesser extent, in the viscus (at protein level). In the mantle, localizes to inner epithelial cells of the outer fold and the outer epithelial cells of the middle fold at the bottom of the periostracal groove.

It localises to the membrane. Binds chitin and may serve as a framework constituent participating in shell formation. Inhibits aragonite precipitation and may regulate aragonite growth during shell layer formation. Does not affect calcite crystallization. The polypeptide is Prisilkin-39 (Pinctada fucata (Akoya pearl oyster)).